Reading from the N-terminus, the 366-residue chain is 5-amino-6-(D-ribitylamino)uracil--L-tyrosine 4-hydroxyphenyl transferase (366 aa).

One can recognise a Radical SAM core domain in the interval arginine 51 to aspartate 290. Cysteine 70, cysteine 74, and cysteine 77 together coordinate [4Fe-4S] cluster.

This sequence belongs to the radical SAM superfamily. CofH family. As to quaternary structure, consists of two subunits, CofG and CofH. Requires [4Fe-4S] cluster as cofactor.

It catalyses the reaction 5-amino-6-(D-ribitylamino)uracil + L-tyrosine + S-adenosyl-L-methionine = 5-amino-5-(4-hydroxybenzyl)-6-(D-ribitylimino)-5,6-dihydrouracil + 2-iminoacetate + 5'-deoxyadenosine + L-methionine + H(+). Its pathway is cofactor biosynthesis; coenzyme F0 biosynthesis. Catalyzes the radical-mediated synthesis of 5-amino-5-(4-hydroxybenzyl)-6-(D-ribitylimino)-5,6-dihydrouracil from 5-amino-6-(D-ribitylamino)uracil and L-tyrosine. The chain is 5-amino-6-(D-ribitylamino)uracil--L-tyrosine 4-hydroxyphenyl transferase from Methanospirillum hungatei JF-1 (strain ATCC 27890 / DSM 864 / NBRC 100397 / JF-1).